The primary structure comprises 137 residues: F420H(2)-dependent biliverdin reductase (137 aa).

Coenzyme F420-(gamma-Glu)n is bound by residues 36-41 (HVVAVG), 54-55 (IT), 60-61 (QK), Arg-67, and 78-81 (GARW).

Belongs to the F420H(2)-dependent biliverdin reductase family. In terms of assembly, homodimer.

The protein localises to the cell surface. The protein resides in the secreted. It carries out the reaction (4Z,15Z)-bilirubin IXalpha + oxidized coenzyme F420-(gamma-L-Glu)(n) + H(+) = biliverdin IXalpha + reduced coenzyme F420-(gamma-L-Glu)(n). Its function is as follows. Catalyzes the F420H(2)-dependent reduction of biliverdin-IXalpha at C10 position, leading to bilirubin-IXalpha, a potent antioxidant. As biliverdin-IXalpha is produced in high amounts in macrophages infected with M.tuberculosis, its reduction by Rv2074 may play a role in protecting mycobacteria against oxidative stress, aiding the persistence of M.tuberculosis infection. The protein is F420H(2)-dependent biliverdin reductase of Mycobacterium tuberculosis (strain CDC 1551 / Oshkosh).